A 379-amino-acid chain; its full sequence is Bifunctional enzyme IspD/IspF (379 aa).

Residues 1 to 223 (MTVAVIIVAA…RERKGLTMDV (223 aa)) are 2-C-methyl-D-erythritol 4-phosphate cytidylyltransferase. A 2-C-methyl-D-erythritol 2,4-cyclodiphosphate synthase region spans residues 224-379 (RLGNGYDVHA…SIATVTLIGA (156 aa)). D230 and H232 together coordinate a divalent metal cation. Residues 230-232 (DVH) and 256-257 (HS) contribute to the 4-CDP-2-C-methyl-D-erythritol 2-phosphate site. H264 contributes to the a divalent metal cation binding site. Residues 278–280 (DIG), 354–357 (TTSE), F361, and R364 each bind 4-CDP-2-C-methyl-D-erythritol 2-phosphate.

It in the N-terminal section; belongs to the IspD/TarI cytidylyltransferase family. IspD subfamily. The protein in the C-terminal section; belongs to the IspF family. A divalent metal cation is required as a cofactor.

It carries out the reaction 2-C-methyl-D-erythritol 4-phosphate + CTP + H(+) = 4-CDP-2-C-methyl-D-erythritol + diphosphate. The catalysed reaction is 4-CDP-2-C-methyl-D-erythritol 2-phosphate = 2-C-methyl-D-erythritol 2,4-cyclic diphosphate + CMP. The protein operates within isoprenoid biosynthesis; isopentenyl diphosphate biosynthesis via DXP pathway; isopentenyl diphosphate from 1-deoxy-D-xylulose 5-phosphate: step 2/6. It participates in isoprenoid biosynthesis; isopentenyl diphosphate biosynthesis via DXP pathway; isopentenyl diphosphate from 1-deoxy-D-xylulose 5-phosphate: step 4/6. Its function is as follows. Bifunctional enzyme that catalyzes the formation of 4-diphosphocytidyl-2-C-methyl-D-erythritol from CTP and 2-C-methyl-D-erythritol 4-phosphate (MEP) (IspD), and catalyzes the conversion of 4-diphosphocytidyl-2-C-methyl-D-erythritol 2-phosphate (CDP-ME2P) to 2-C-methyl-D-erythritol 2,4-cyclodiphosphate (ME-CPP) with a corresponding release of cytidine 5-monophosphate (CMP) (IspF). The chain is Bifunctional enzyme IspD/IspF from Rhodobacter capsulatus (strain ATCC BAA-309 / NBRC 16581 / SB1003).